We begin with the raw amino-acid sequence, 257 residues long: Putative carboxymethylenebutenolidase (257 aa).

Catalysis depends on residues Cys148, Asp195, and His226.

The protein belongs to the dienelactone hydrolase family.

It carries out the reaction 2-(5-oxo-2,5-dihydrofuran-2-ylidene)acetate + H2O = 4-oxohex-2-enedioate + H(+). This Saccharolobus solfataricus (strain ATCC 35092 / DSM 1617 / JCM 11322 / P2) (Sulfolobus solfataricus) protein is Putative carboxymethylenebutenolidase.